Reading from the N-terminus, the 248-residue chain is Peptidyl-tRNA hydrolase (248 aa).

Residue Tyr14 participates in tRNA binding. His19 serves as the catalytic Proton acceptor. Residues Phe64, Asn66, and Asn112 each contribute to the tRNA site. The interval 190–248 (PRSSTGEASKGRKKAQKSEPGVAKTPAKAATPEAPAAGDIPAAPEDSRSPMQKLLDKFK) is disordered. Positions 212-226 (AKTPAKAATPEAPAA) are enriched in low complexity.

This sequence belongs to the PTH family. In terms of assembly, monomer.

The protein localises to the cytoplasm. The catalysed reaction is an N-acyl-L-alpha-aminoacyl-tRNA + H2O = an N-acyl-L-amino acid + a tRNA + H(+). Functionally, hydrolyzes ribosome-free peptidyl-tRNAs (with 1 or more amino acids incorporated), which drop off the ribosome during protein synthesis, or as a result of ribosome stalling. Its function is as follows. Catalyzes the release of premature peptidyl moieties from peptidyl-tRNA molecules trapped in stalled 50S ribosomal subunits, and thus maintains levels of free tRNAs and 50S ribosomes. This is Peptidyl-tRNA hydrolase from Ruegeria sp. (strain TM1040) (Silicibacter sp.).